Reading from the N-terminus, the 677-residue chain is Pannexin-2 (677 aa).

Over 11-53 (MATALLAGEKLRELILPGSQDDKAGALAALLLQLKLELPFDRV) the chain is Cytoplasmic. The helical transmembrane segment at 54 to 74 (VTIGTVLVPILLVTLVFTKNF) threads the bilayer. Residues 75–125 (AEEPIYCYTPHNFTRDQALYARGYCWTELRDALPGVDASLWPSLFEHKFLP) lie on the Extracellular side of the membrane. An N-linked (GlcNAc...) asparagine glycan is attached at Asn86. A helical membrane pass occupies residues 126 to 146 (YALLAFAAIMYVPALGWEFLA). The Cytoplasmic portion of the chain corresponds to 147 to 230 (STRLTSELNF…NFLAKLYLAR (84 aa)). The helical transmembrane segment at 231-251 (HVLILLLSVVPISYLCTYYAT) threads the bilayer. The Extracellular portion of the chain corresponds to 252–295 (QKQNEFTCALGASPDGPVGSAGPTVRVSCKLPSVQLQRIIAGVD). A helical transmembrane segment spans residues 296–316 (IVLLCFMNLIILVNLIHLFIF). Residues 317–617 (RKSNFIFDKL…LGKADPLTIL (301 aa)) are Cytoplasmic-facing. Positions 394 to 408 (TTPTVRDSGIQTVDP) are enriched in polar residues. Disordered stretches follow at residues 394-425 (TTPT…PVVK) and 485-512 (AHHY…HTRH). Phosphoserine is present on residues Ser593 and Ser604.

It belongs to the pannexin family. As to quaternary structure, homoheptameric. In terms of processing, S-palmitoylated in neural stem and progenitor cells. Cleaved by CASP3 and CASP7 during apoptosis. Cleavage has no effect on it function. As to expression, expression is enriched in central nervous system. Expressed in suprabasal layers of skin epidermis. More aboundantly expressed in skin.

The protein resides in the cell membrane. Its subcellular location is the golgi apparatus membrane. The protein localises to the endoplasmic reticulum membrane. It carries out the reaction ATP(in) = ATP(out). The catalysed reaction is chloride(in) = chloride(out). The enzyme catalyses iodide(out) = iodide(in). It catalyses the reaction Na(+)(in) = Na(+)(out). It carries out the reaction D-gluconate(in) = D-gluconate(out). In terms of biological role, ion channel with a slight anion preference. Also able to release ATP. Plays a role in regulating neurogenesis and apoptosis in keratinocytes. The protein is Pannexin-2 (Panx2) of Mus musculus (Mouse).